Reading from the N-terminus, the 371-residue chain is Probable inactive methyltransferase Os04g0175900 (371 aa).

A substrate-binding site is contributed by 137-143 (LDVDEDN). The substrate binding stretch occupies residues 170-188 (LFEYMGTNHRFNMLFNQAM). 4 residues coordinate S-adenosyl-L-methionine: glycine 216, aspartate 239, methionine 260, and lysine 273.

This sequence belongs to the class I-like SAM-binding methyltransferase superfamily. Cation-independent O-methyltransferase family. COMT subfamily.

In Oryza sativa subsp. japonica (Rice), this protein is Probable inactive methyltransferase Os04g0175900.